A 633-amino-acid polypeptide reads, in one-letter code: Extracellular metalloproteinase 3 (633 aa).

Positions 1-18 (MHGLLLAGLLALPMNVLA) are cleaved as a signal peptide. A propeptide spanning residues 19–246 (HPAEQHASNV…VHNVVDYVAS (228 aa)) is cleaved from the precursor. The N-linked (GlcNAc...) asparagine glycan is linked to Asn410. Zn(2+) is bound at residue His429. The active site involves Glu430. A Zn(2+)-binding site is contributed by His433. Residues Asn480 and Asn622 are each glycosylated (N-linked (GlcNAc...) asparagine).

This sequence belongs to the peptidase M36 family. Requires Zn(2+) as cofactor.

The protein resides in the secreted. Its function is as follows. Secreted metalloproteinase probably acting as a virulence factor. The sequence is that of Extracellular metalloproteinase 3 (MEP3) from Trichophyton tonsurans (Scalp ringworm fungus).